A 228-amino-acid chain; its full sequence is MWQAQIFTLYPDFFPGPLNKGLYGKALTNKIWDLKVVNFREAAEDKHKTVDDTPFGGGSGMLLKADILAKSLDENKKEGERIFYLSPKGKKLDQKLALELSKEKSISLICGHFEGVDERLLSTRNIEELSIGDFILSGGETAAFVVLDSVLRLLPGVLGNEQSKNDESFENGLLEYPQYTKPQIWEEKSVPEVLLSGDHNKIKDWRLSQSEAITRVRRPDLWEKYKKN.

S-adenosyl-L-methionine contacts are provided by residues glycine 111 and 131–136; that span reads IGDFIL.

Belongs to the RNA methyltransferase TrmD family. As to quaternary structure, homodimer.

Its subcellular location is the cytoplasm. The catalysed reaction is guanosine(37) in tRNA + S-adenosyl-L-methionine = N(1)-methylguanosine(37) in tRNA + S-adenosyl-L-homocysteine + H(+). Its function is as follows. Specifically methylates guanosine-37 in various tRNAs. The protein is tRNA (guanine-N(1)-)-methyltransferase of Pelagibacter ubique (strain HTCC1062).